The following is a 182-amino-acid chain: Adenine phosphoribosyltransferase (182 aa).

This sequence belongs to the purine/pyrimidine phosphoribosyltransferase family. Homodimer.

It localises to the cytoplasm. The catalysed reaction is AMP + diphosphate = 5-phospho-alpha-D-ribose 1-diphosphate + adenine. It participates in purine metabolism; AMP biosynthesis via salvage pathway; AMP from adenine: step 1/1. Functionally, catalyzes a salvage reaction resulting in the formation of AMP, that is energically less costly than de novo synthesis. The polypeptide is Adenine phosphoribosyltransferase (Pseudomonas syringae pv. tomato (strain ATCC BAA-871 / DC3000)).